The following is a 238-amino-acid chain: Uridylate kinase (238 aa).

An ATP-binding site is contributed by 12 to 15 (KLSG). Residues 20–25 (GEKGFG) are involved in allosteric activation by GTP. Residue G54 participates in UMP binding. ATP contacts are provided by G55 and R59. UMP contacts are provided by residues D72 and 133 to 140 (TGNPYFST). Positions 166 and 169 each coordinate ATP.

The protein belongs to the UMP kinase family. Homohexamer.

It is found in the cytoplasm. It catalyses the reaction UMP + ATP = UDP + ADP. It functions in the pathway pyrimidine metabolism; CTP biosynthesis via de novo pathway; UDP from UMP (UMPK route): step 1/1. With respect to regulation, allosterically activated by GTP. Inhibited by UTP. In terms of biological role, catalyzes the reversible phosphorylation of UMP to UDP. This is Uridylate kinase from Clostridium botulinum (strain Langeland / NCTC 10281 / Type F).